A 505-amino-acid polypeptide reads, in one-letter code: Beta-glucosidase 18 (505 aa).

The first 26 residues, 1–26 (MAGGSKTRIHASLVSTLLLLLPLASA), serve as a signal peptide directing secretion. Residue glutamine 46 coordinates a beta-D-glucoside. Asparagine 55 carries an N-linked (GlcNAc...) asparagine glycan. A beta-D-glucoside-binding positions include histidine 148 and 193-194 (NE). The active-site Proton donor is the glutamate 194. An intrachain disulfide couples cysteine 213 to cysteine 220. Tyrosine 337 is a binding site for a beta-D-glucoside. A disulfide bridge connects residues cysteine 345 and cysteine 350. Residues glutamate 408, tryptophan 457, 464-465 (EW), and phenylalanine 473 each bind a beta-D-glucoside. Glutamate 408 (nucleophile) is an active-site residue.

Belongs to the glycosyl hydrolase 1 family. Expressed in roots, leaves, flowers and pollen.

It catalyses the reaction Hydrolysis of terminal, non-reducing beta-D-glucosyl residues with release of beta-D-glucose.. In terms of biological role, hydrolyzes glycosides and monolignol glucosides. Can hydrolyze para-nitrophenyl beta-D-glucopyranoside (pNPGlc) in vitro. Hydrolyzes para-nitrophenyl beta-D-fucopyranoside, para-nitrophenyl beta-D-galactopyranoside and para-nitrophenyl beta-D-xylopyranoside in vitro. Hydrolyzes the monolignol glucosides coniferin and syringin with high catalytic efficiencies. In Oryza sativa subsp. japonica (Rice), this protein is Beta-glucosidase 18.